The chain runs to 119 residues: MICOS complex subunit MIC13 (119 aa).

The Mitochondrial matrix portion of the chain corresponds to 1 to 7; that stretch reads MVARVWS. Residues 8–26 traverse the membrane as a helical segment; that stretch reads LMRFLIKGSVAGGAVYLVY. Residues 27 to 119 lie on the Mitochondrial intermembrane side of the membrane; it reads DQELLGPSDK…GWEYLKEHSK (93 aa).

The protein belongs to the MICOS complex subunit Mic13 family. Component of the mitochondrial contact site and cristae organizing system (MICOS) complex, composed of at least MICOS10/MIC10, CHCHD3/MIC19, CHCHD6/MIC25, APOO/MIC26, MICOS13/MIC13, APOOL/MIC27 and IMMT/MIC60. The MICOS complex associates with mitochondrial outer membrane proteins SAMM50, MTX1 and MTX2 (together described as components of the mitochondrial outer membrane sorting assembly machinery (SAM) complex) and DNAJC11, mitochondrial inner membrane protein TMEM11 and with HSPA9. The MICOS and SAM complexes together with DNAJC11 are part of a large protein complex spanning both membranes termed the mitochondrial intermembrane space bridging (MIB) complex.

The protein localises to the mitochondrion inner membrane. Functionally, component of the MICOS complex, a large protein complex of the mitochondrial inner membrane that plays crucial roles in the maintenance of crista junctions, inner membrane architecture, and formation of contact sites to the outer membrane. Constituent of mature MICOS complex, it is required for the formation of cristae junction (CJ) and maintenance of cristae morphology. Required for the incorporation of MICOS10/MIC10 into the MICOS complex. The chain is MICOS complex subunit MIC13 (Micos13) from Mus musculus (Mouse).